An 89-amino-acid chain; its full sequence is Small ribosomal subunit protein uS15 (89 aa).

This sequence belongs to the universal ribosomal protein uS15 family. Part of the 30S ribosomal subunit. Forms a bridge to the 50S subunit in the 70S ribosome, contacting the 23S rRNA.

Its function is as follows. One of the primary rRNA binding proteins, it binds directly to 16S rRNA where it helps nucleate assembly of the platform of the 30S subunit by binding and bridging several RNA helices of the 16S rRNA. In terms of biological role, forms an intersubunit bridge (bridge B4) with the 23S rRNA of the 50S subunit in the ribosome. This chain is Small ribosomal subunit protein uS15, found in Klebsiella pneumoniae (strain 342).